A 104-amino-acid polypeptide reads, in one-letter code: Large ribosomal subunit protein bL21 (104 aa).

This sequence belongs to the bacterial ribosomal protein bL21 family. As to quaternary structure, part of the 50S ribosomal subunit. Contacts protein L20.

Functionally, this protein binds to 23S rRNA in the presence of protein L20. The polypeptide is Large ribosomal subunit protein bL21 (Kosmotoga olearia (strain ATCC BAA-1733 / DSM 21960 / TBF 19.5.1)).